Consider the following 286-residue polypeptide: Enoyl-CoA hydratase ChsH3 (286 aa).

The MaoC-like domain maps to 163-271 (APERAPDLQV…RLVASVVAPT (109 aa)). Residues aspartate 189 and histidine 194 contribute to the active site.

It belongs to the enoyl-CoA hydratase/isomerase family. In terms of assembly, homodimer.

It catalyses the reaction (22E)-3-oxochola-4,22-dien-24-oyl-CoA + H2O = (22S)-hydroxy-3-oxo-chol-4-ene-24-oyl-CoA. Its pathway is steroid metabolism; cholesterol degradation. Degradation of the cholesterol side chain involves 3 multistep beta-oxidation cycles, this is involved in the second cycle. Hydrates bulky steroid enoyl-CoA esters, has highest activity with 3-OCDO-CoA (3-oxochol-4,22-dien-24-oyl-CoA) making (22S)-HOCO-CoA, followed by octenoyl-CoA, with weaker activity on 3-OCDS-CoA (3-oxocholest-4,24-dien-26-oyl-CoA) and none on 3-OPDC-CoA (3-oxo-pregna-4,17-diene-20- carboxyl-CoA). Hydrates the same substrate as EchA19, but the 2 enzymes make different stereoisomers of the product. In Mycobacterium tuberculosis (strain ATCC 25618 / H37Rv), this protein is Enoyl-CoA hydratase ChsH3.